A 90-amino-acid chain; its full sequence is DNA-binding protein HU-alpha (90 aa).

The protein belongs to the bacterial histone-like protein family. Heterodimer of an alpha and a beta chain.

Histone-like DNA-binding protein which is capable of wrapping DNA to stabilize it, and thus to prevent its denaturation under extreme environmental conditions. The sequence is that of DNA-binding protein HU-alpha (hupA) from Vibrio cholerae serotype O1 (strain ATCC 39315 / El Tor Inaba N16961).